Reading from the N-terminus, the 509-residue chain is Maturase K (509 aa).

It belongs to the intron maturase 2 family. MatK subfamily.

Its subcellular location is the plastid. It localises to the chloroplast. Usually encoded in the trnK tRNA gene intron. Probably assists in splicing its own and other chloroplast group II introns. This is Maturase K from Solanum tuberosum (Potato).